The following is a 478-amino-acid chain: Phosphoglycerate kinase 2, chloroplastic (478 aa).

Residues 1 to 74 (MASTAATAAL…GKGARGVITM (74 aa)) constitute a chloroplast transit peptide. At Ser-78 the chain carries Phosphoserine. The (2R)-3-phosphoglycerate site is built by Ala-96, Asp-97, Asn-99, Arg-113, Thr-135, His-136, Gly-138, Arg-139, Arg-194, His-226, and Arg-227. Gly-272 contacts ADP. Gly-272 is a CDP binding site. AMP-binding residues include Lys-274 and Lys-278. Position 278 (Lys-278) interacts with ATP. An ADP-binding site is contributed by Gly-296. Gly-296 serves as a coordination point for CDP. AMP is bound by residues Gly-297 and Gly-369. ATP is bound by residues Gly-297 and Gly-369. Residues Gly-394 and Phe-399 each coordinate CDP. Phe-399 contacts ADP. Glu-400 contacts AMP. ATP-binding residues include Glu-400, Asp-431, and Ser-432. A Mg(2+)-binding site is contributed by Asp-431.

It belongs to the phosphoglycerate kinase family. As to quaternary structure, monomer. Mg(2+) serves as cofactor.

Its subcellular location is the plastid. It localises to the chloroplast. It carries out the reaction (2R)-3-phosphoglycerate + ATP = (2R)-3-phospho-glyceroyl phosphate + ADP. Its pathway is carbohydrate biosynthesis; Calvin cycle. In Arabidopsis thaliana (Mouse-ear cress), this protein is Phosphoglycerate kinase 2, chloroplastic.